Here is a 332-residue protein sequence, read N- to C-terminus: Ribose-phosphate pyrophosphokinase (332 aa).

Residues 43–45 and 102–103 contribute to the ATP site; these read DGE and RQ. Positions 136 and 176 each coordinate Mg(2+). Lys-199 is an active-site residue. D-ribose 5-phosphate-binding positions include Arg-201, Asp-225, and 229 to 233; that span reads DTGGT.

It belongs to the ribose-phosphate pyrophosphokinase family. Class I subfamily. In terms of assembly, homohexamer. Mg(2+) is required as a cofactor.

Its subcellular location is the cytoplasm. It carries out the reaction D-ribose 5-phosphate + ATP = 5-phospho-alpha-D-ribose 1-diphosphate + AMP + H(+). It participates in metabolic intermediate biosynthesis; 5-phospho-alpha-D-ribose 1-diphosphate biosynthesis; 5-phospho-alpha-D-ribose 1-diphosphate from D-ribose 5-phosphate (route I): step 1/1. Functionally, involved in the biosynthesis of the central metabolite phospho-alpha-D-ribosyl-1-pyrophosphate (PRPP) via the transfer of pyrophosphoryl group from ATP to 1-hydroxyl of ribose-5-phosphate (Rib-5-P). The sequence is that of Ribose-phosphate pyrophosphokinase from Mycoplasma genitalium (strain ATCC 33530 / DSM 19775 / NCTC 10195 / G37) (Mycoplasmoides genitalium).